A 350-amino-acid chain; its full sequence is Anthranilate phosphoribosyltransferase (350 aa).

5-phospho-alpha-D-ribose 1-diphosphate-binding positions include glycine 94, 97 to 98 (GD), threonine 102, 104 to 107 (NIST), 122 to 130 (KHGNRSVSS), and serine 134. Glycine 94 is a binding site for anthranilate. Serine 106 is a Mg(2+) binding site. An anthranilate-binding site is contributed by asparagine 125. Arginine 180 lines the anthranilate pocket. The Mg(2+) site is built by aspartate 239 and glutamate 240.

It belongs to the anthranilate phosphoribosyltransferase family. In terms of assembly, homodimer. Mg(2+) serves as cofactor.

The enzyme catalyses N-(5-phospho-beta-D-ribosyl)anthranilate + diphosphate = 5-phospho-alpha-D-ribose 1-diphosphate + anthranilate. It functions in the pathway amino-acid biosynthesis; L-tryptophan biosynthesis; L-tryptophan from chorismate: step 2/5. Its function is as follows. Catalyzes the transfer of the phosphoribosyl group of 5-phosphorylribose-1-pyrophosphate (PRPP) to anthranilate to yield N-(5'-phosphoribosyl)-anthranilate (PRA). This is Anthranilate phosphoribosyltransferase from Geotalea daltonii (strain DSM 22248 / JCM 15807 / FRC-32) (Geobacter daltonii).